Consider the following 241-residue polypeptide: Phosphoribosylaminoimidazole-succinocarboxamide synthase (241 aa).

This sequence belongs to the SAICAR synthetase family.

It carries out the reaction 5-amino-1-(5-phospho-D-ribosyl)imidazole-4-carboxylate + L-aspartate + ATP = (2S)-2-[5-amino-1-(5-phospho-beta-D-ribosyl)imidazole-4-carboxamido]succinate + ADP + phosphate + 2 H(+). Its pathway is purine metabolism; IMP biosynthesis via de novo pathway; 5-amino-1-(5-phospho-D-ribosyl)imidazole-4-carboxamide from 5-amino-1-(5-phospho-D-ribosyl)imidazole-4-carboxylate: step 1/2. The chain is Phosphoribosylaminoimidazole-succinocarboxamide synthase from Lacticaseibacillus casei (strain BL23) (Lactobacillus casei).